The following is a 372-amino-acid chain: Glutamate 5-kinase (372 aa).

Lys14 lines the ATP pocket. Substrate is bound by residues Ser54, Asp141, and Asn153. 173 to 174 (TD) contributes to the ATP binding site. A PUA domain is found at 280 to 358 (RGRVVIDAGA…SEIESVLGHL (79 aa)).

It belongs to the glutamate 5-kinase family.

The protein localises to the cytoplasm. It catalyses the reaction L-glutamate + ATP = L-glutamyl 5-phosphate + ADP. It functions in the pathway amino-acid biosynthesis; L-proline biosynthesis; L-glutamate 5-semialdehyde from L-glutamate: step 1/2. In terms of biological role, catalyzes the transfer of a phosphate group to glutamate to form L-glutamate 5-phosphate. This is Glutamate 5-kinase from Cupriavidus pinatubonensis (strain JMP 134 / LMG 1197) (Cupriavidus necator (strain JMP 134)).